Consider the following 418-residue polypeptide: Gamma-glutamyl phosphate reductase (418 aa).

The protein belongs to the gamma-glutamyl phosphate reductase family.

The protein localises to the cytoplasm. The catalysed reaction is L-glutamate 5-semialdehyde + phosphate + NADP(+) = L-glutamyl 5-phosphate + NADPH + H(+). Its pathway is amino-acid biosynthesis; L-proline biosynthesis; L-glutamate 5-semialdehyde from L-glutamate: step 2/2. Its function is as follows. Catalyzes the NADPH-dependent reduction of L-glutamate 5-phosphate into L-glutamate 5-semialdehyde and phosphate. The product spontaneously undergoes cyclization to form 1-pyrroline-5-carboxylate. In Geobacter sulfurreducens (strain ATCC 51573 / DSM 12127 / PCA), this protein is Gamma-glutamyl phosphate reductase.